A 201-amino-acid chain; its full sequence is MAIGYPNGKKYAASHEGIPQKKRKAPVTYGKRGMSLEDDLNDTIAYYLAQDIAVIHKKPTPVQIVSVDYPKRSSAKIKEAYFKTPSTTDYNGVYKGKYIDFEAKETQNTTSFPLSNFHDHQMIHMANVLKQDGIVFVIIAFQKIGETYFIPFEKFYPFWQRMQSGGRKSVTIAEIQDVSDQIPYGLNPRLDFLKSIEKLYF.

Residues Thr-87, Asp-89, Glu-102, and Gln-121 each coordinate Mg(2+).

It belongs to the RecU family. Mg(2+) is required as a cofactor.

The protein resides in the cytoplasm. It catalyses the reaction Endonucleolytic cleavage at a junction such as a reciprocal single-stranded crossover between two homologous DNA duplexes (Holliday junction).. Functionally, endonuclease that resolves Holliday junction intermediates in genetic recombination. Cleaves mobile four-strand junctions by introducing symmetrical nicks in paired strands. Promotes annealing of linear ssDNA with homologous dsDNA. Required for DNA repair, homologous recombination and chromosome segregation. This is Holliday junction resolvase RecU from Listeria welshimeri serovar 6b (strain ATCC 35897 / DSM 20650 / CCUG 15529 / CIP 8149 / NCTC 11857 / SLCC 5334 / V8).